A 383-amino-acid chain; its full sequence is Processive diacylglycerol beta-glucosyltransferase (383 aa).

The protein belongs to the glycosyltransferase 28 family. UgtP subfamily.

The protein localises to the cell membrane. It carries out the reaction a 1,2-diacyl-3-O-(beta-D-glucopyranosyl)-sn-glycerol + UDP-alpha-D-glucose = a 1,2-diacyl-3-O-(beta-D-Glc-(1-&gt;6)-beta-D-Glc)-sn-glycerol + UDP + H(+). The catalysed reaction is a 1,2-diacyl-3-O-(beta-D-Glc-(1-&gt;6)-beta-D-Glc)-sn-glycerol + UDP-alpha-D-glucose = a 1,2-diacyl-3-O-(beta-D-Glc-(1-&gt;6)-beta-D-Glc-(1-&gt;6)-beta-D-Glc)-sn-glycerol + UDP + H(+). The enzyme catalyses a 1,2-diacyl-sn-glycerol + UDP-alpha-D-glucose = a 1,2-diacyl-3-O-(beta-D-glucopyranosyl)-sn-glycerol + UDP + H(+). It functions in the pathway glycolipid metabolism; diglucosyl-diacylglycerol biosynthesis. Processive glucosyltransferase involved in the biosynthesis of both the bilayer- and non-bilayer-forming membrane glucolipids. Is able to successively transfer up to three glucosyl residues to diacylglycerol (DAG), thereby catalyzing the formation of beta-monoglucosyl-DAG (3-O-(beta-D-glucopyranosyl)-1,2-diacyl-sn-glycerol), beta-diglucosyl-DAG (3-O-(beta-D-glucopyranosyl-beta-(1-&gt;6)-D-glucopyranosyl)-1,2-diacyl-sn-glycerol) and beta-triglucosyl-DAG (3-O-(beta-D-glucopyranosyl-beta-(1-&gt;6)-D-glucopyranosyl-beta-(1-&gt;6)-D-glucopyranosyl)-1,2-diacyl-sn-glycerol). Beta-diglucosyl-DAG is the predominant glycolipid found in Bacillales and is also used as a membrane anchor for lipoteichoic acid (LTA). This is Processive diacylglycerol beta-glucosyltransferase from Bacillus licheniformis (strain ATCC 14580 / DSM 13 / JCM 2505 / CCUG 7422 / NBRC 12200 / NCIMB 9375 / NCTC 10341 / NRRL NRS-1264 / Gibson 46).